A 363-amino-acid chain; its full sequence is S-adenosylmethionine:tRNA ribosyltransferase-isomerase (363 aa).

Belongs to the QueA family. Monomer.

Its subcellular location is the cytoplasm. The catalysed reaction is 7-aminomethyl-7-carbaguanosine(34) in tRNA + S-adenosyl-L-methionine = epoxyqueuosine(34) in tRNA + adenine + L-methionine + 2 H(+). The protein operates within tRNA modification; tRNA-queuosine biosynthesis. Functionally, transfers and isomerizes the ribose moiety from AdoMet to the 7-aminomethyl group of 7-deazaguanine (preQ1-tRNA) to give epoxyqueuosine (oQ-tRNA). The protein is S-adenosylmethionine:tRNA ribosyltransferase-isomerase of Synechococcus sp. (strain RCC307).